The following is a 115-amino-acid chain: Large ribosomal subunit protein bL20 (115 aa).

The protein belongs to the bacterial ribosomal protein bL20 family.

Its function is as follows. Binds directly to 23S ribosomal RNA and is necessary for the in vitro assembly process of the 50S ribosomal subunit. It is not involved in the protein synthesizing functions of that subunit. This Borrelia hermsii (strain HS1 / DAH) protein is Large ribosomal subunit protein bL20.